The sequence spans 362 residues: UDP-N-acetylglucosamine--N-acetylmuramyl-(pentapeptide) pyrophosphoryl-undecaprenol N-acetylglucosamine transferase (362 aa).

UDP-N-acetyl-alpha-D-glucosamine-binding positions include 11–13 (TGG), Asn-124, Arg-163, Ser-191, Ile-246, and Gln-291.

The protein belongs to the glycosyltransferase 28 family. MurG subfamily.

It localises to the cell inner membrane. It catalyses the reaction di-trans,octa-cis-undecaprenyl diphospho-N-acetyl-alpha-D-muramoyl-L-alanyl-D-glutamyl-meso-2,6-diaminopimeloyl-D-alanyl-D-alanine + UDP-N-acetyl-alpha-D-glucosamine = di-trans,octa-cis-undecaprenyl diphospho-[N-acetyl-alpha-D-glucosaminyl-(1-&gt;4)]-N-acetyl-alpha-D-muramoyl-L-alanyl-D-glutamyl-meso-2,6-diaminopimeloyl-D-alanyl-D-alanine + UDP + H(+). It participates in cell wall biogenesis; peptidoglycan biosynthesis. Functionally, cell wall formation. Catalyzes the transfer of a GlcNAc subunit on undecaprenyl-pyrophosphoryl-MurNAc-pentapeptide (lipid intermediate I) to form undecaprenyl-pyrophosphoryl-MurNAc-(pentapeptide)GlcNAc (lipid intermediate II). This is UDP-N-acetylglucosamine--N-acetylmuramyl-(pentapeptide) pyrophosphoryl-undecaprenol N-acetylglucosamine transferase from Idiomarina loihiensis (strain ATCC BAA-735 / DSM 15497 / L2-TR).